A 360-amino-acid chain; its full sequence is uncharacterized protein (360 aa).

Solcar repeat units follow at residues 34–153, 172–256, and 266–355; these read VGVL…LSVW, PDWS…FKTN, and NPFV…FKFL. 6 helical membrane passes run 40–60, 125–145, 178–198, 225–247, 269–289, and 327–348; these read VSAS…LDVV, LWSG…FYFT, AVAG…IEMI, ISSF…GIYW, VVSF…THPF, and FSSG…MISF.

Belongs to the mitochondrial carrier (TC 2.A.29) family.

It is found in the mitochondrion inner membrane. This is an uncharacterized protein from Caenorhabditis elegans.